A 1002-amino-acid polypeptide reads, in one-letter code: Calmin (1002 aa).

The tract at residues Met-1 to Glu-288 is actin-binding. A Calponin-homology (CH) 1 domain is found at Asn-32–Gln-139. A compositionally biased stretch (low complexity) spans Arg-149–Ser-168. Residues Arg-149–Ala-180 are disordered. One can recognise a Calponin-homology (CH) 2 domain in the interval Arg-187–Pro-291. Residues Ser-301 and Ser-402 each carry the phosphoserine modification. Disordered regions lie at residues Gln-389 to Asn-418, Asn-500 to Thr-532, Asn-581 to Leu-716, and Asp-749 to Ile-911. A compositionally biased stretch (low complexity) spans Ser-396–Ser-409. Residues Asn-500–Asn-509 show a composition bias toward polar residues. The span at Ser-585–Gly-606 shows a compositional bias: basic and acidic residues. Basic residues predominate over residues Lys-607 to Lys-617. Composition is skewed to basic and acidic residues over residues Asp-618–Ser-635 and Pro-650–Glu-659. A Phosphoserine modification is found at Ser-619. Residues Gly-681–Leu-697 are compositionally biased toward low complexity. Thr-699 is subject to Phosphothreonine. Residues Ser-713 and Ser-769 each carry the phosphoserine modification. Positions Gly-776 to Ser-794 are enriched in low complexity. Over residues Pro-818–Asp-834 the composition is skewed to basic and acidic residues. Positions Ser-835–Asn-846 are enriched in polar residues. Phosphoserine is present on residues Ser-838 and Ser-841. Basic and acidic residues predominate over residues Asn-854 to Lys-863. The segment covering Tyr-898–Ser-910 has biased composition (polar residues). Ser-907 carries the post-translational modification Phosphoserine. Residues Met-977–Leu-997 traverse the membrane as a helical; Anchor for type IV membrane protein segment.

As to expression, widely expressed at intermediate level.

Its subcellular location is the membrane. This is Calmin (CLMN) from Homo sapiens (Human).